The sequence spans 274 residues: Large ribosomal subunit protein uL2 (274 aa).

Positions Gly-222 to Gly-274 are disordered. The span at Asp-229–Gly-239 shows a compositional bias: basic and acidic residues.

The protein belongs to the universal ribosomal protein uL2 family. As to quaternary structure, part of the 50S ribosomal subunit. Forms a bridge to the 30S subunit in the 70S ribosome.

In terms of biological role, one of the primary rRNA binding proteins. Required for association of the 30S and 50S subunits to form the 70S ribosome, for tRNA binding and peptide bond formation. It has been suggested to have peptidyltransferase activity; this is somewhat controversial. Makes several contacts with the 16S rRNA in the 70S ribosome. The chain is Large ribosomal subunit protein uL2 from Thermosipho africanus (strain TCF52B).